The chain runs to 551 residues: Arginine--tRNA ligase (551 aa).

The 'HIGH' region signature appears at 125-135; that stretch reads ANPTGPLHIGH.

The protein belongs to the class-I aminoacyl-tRNA synthetase family. As to quaternary structure, monomer.

The protein resides in the cytoplasm. It catalyses the reaction tRNA(Arg) + L-arginine + ATP = L-arginyl-tRNA(Arg) + AMP + diphosphate. The chain is Arginine--tRNA ligase from Nitratidesulfovibrio vulgaris (strain DSM 19637 / Miyazaki F) (Desulfovibrio vulgaris).